The sequence spans 263 residues: MPEGPEIRRAADNLEAAIKGKPLTDVWFAFPQLKTYQSQLIGQHVTHVETRGKALLTHFSNDLTLYSHNQLYGVWRVVDTGEESQTTRVLRVKLQTADKTILLYSASDIEMLTPEQLTMHPFLQRVGPDVLDPNLTPEVVKERLLSPRFRNRQFAGLLLDQAFLAGLGNYLRVEILWQVGLTGNHKAKDLNAAQLDALAHALLDIPRFSYATRGQVDENKHHGALFRFKVFHRDGELCERCGGIIEKTTLSSRPFYWCPGCQH.

The Schiff-base intermediate with DNA role is filled by proline 2. Glutamate 3 functions as the Proton donor in the catalytic mechanism. Catalysis depends on lysine 53, which acts as the Proton donor; for beta-elimination activity. Glutamine 70, arginine 125, and asparagine 169 together coordinate DNA. The segment at 229–263 adopts an FPG-type zinc-finger fold; the sequence is KVFHRDGELCERCGGIIEKTTLSSRPFYWCPGCQH. Arginine 253 serves as the catalytic Proton donor; for delta-elimination activity.

Belongs to the FPG family. The cofactor is Zn(2+).

The enzyme catalyses 2'-deoxyribonucleotide-(2'-deoxyribose 5'-phosphate)-2'-deoxyribonucleotide-DNA = a 3'-end 2'-deoxyribonucleotide-(2,3-dehydro-2,3-deoxyribose 5'-phosphate)-DNA + a 5'-end 5'-phospho-2'-deoxyribonucleoside-DNA + H(+). Its function is as follows. Involved in base excision repair of DNA damaged by oxidation or by mutagenic agents. Acts as a DNA glycosylase that recognizes and removes damaged bases. Has a preference for oxidized pyrimidines, such as thymine glycol, 5,6-dihydrouracil and 5,6-dihydrothymine. Has AP (apurinic/apyrimidinic) lyase activity and introduces nicks in the DNA strand. Cleaves the DNA backbone by beta-delta elimination to generate a single-strand break at the site of the removed base with both 3'- and 5'-phosphates. The sequence is that of Endonuclease 8 from Shigella dysenteriae serotype 1 (strain Sd197).